We begin with the raw amino-acid sequence, 100 residues long: ATP phosphoribosyltransferase (100 aa).

This sequence belongs to the ATP phosphoribosyltransferase family. Long subfamily. In terms of assembly, equilibrium between an active dimeric form, an inactive hexameric form and higher aggregates. Interconversion between the various forms is largely reversible and is influenced by the natural substrates and inhibitors of the enzyme. It depends on Mg(2+) as a cofactor.

The protein localises to the cytoplasm. It carries out the reaction 1-(5-phospho-beta-D-ribosyl)-ATP + diphosphate = 5-phospho-alpha-D-ribose 1-diphosphate + ATP. It participates in amino-acid biosynthesis; L-histidine biosynthesis; L-histidine from 5-phospho-alpha-D-ribose 1-diphosphate: step 1/9. Its activity is regulated as follows. Feedback inhibited by histidine. In terms of biological role, catalyzes the condensation of ATP and 5-phosphoribose 1-diphosphate to form N'-(5'-phosphoribosyl)-ATP (PR-ATP). Has a crucial role in the pathway because the rate of histidine biosynthesis seems to be controlled primarily by regulation of HisG enzymatic activity. This Klebsiella pneumoniae protein is ATP phosphoribosyltransferase (hisG).